The sequence spans 372 residues: Envelope phospholipase OPG057 (372 aa).

Residues 153–156 (YPPL) carry the YPPL motif. 2 S-palmitoyl cysteine; by host lipidation sites follow: Cys-185 and Cys-186. Residues 307–334 (FTIQNNTKLLIVDDEYVHITSANFDGTH) form the PLD phosphodiesterase domain.

Belongs to the orthopoxvirus OPG057 family. As to quaternary structure, interacts with protein OPG190. Palmitoylated. Attachment of the palmitate moiety is essential for correct intracellular targeting and protein function.

The protein resides in the virion membrane. It is found in the host Golgi apparatus. The protein localises to the host trans-Golgi network. It localises to the host endoplasmic reticulum membrane. It catalyses the reaction a 1,2-diacyl-sn-glycero-3-phosphocholine + H2O = a 1,2-diacyl-sn-glycero-3-phosphate + choline + H(+). Functionally, major envelope protein that plays a role in the biogenesis of the viral double membrane and in egress of virus from the host cell. Produces the wrapped form of virus that is required for cell-to-cell spread. Acts as a lipase with broad specificity including phospholipase C, phospholipase A, and triacylglycerol lipase activities. The polypeptide is Envelope phospholipase OPG057 (OPG057) (Homo sapiens (Human)).